The chain runs to 23 residues: GLFGVLAKVASHVVPAIAEHFQA.

Ala-23 is subject to Alanine amide.

Expressed by the skin dorsal glands.

It localises to the secreted. Shows antibacterial activity against S.aureus and S.uberis. The chain is Maculatin-1.2 from Ranoidea genimaculata (Brown-spotted tree frog).